The chain runs to 444 residues: Ribosomal protein uS12 methylthiotransferase RimO (444 aa).

An MTTase N-terminal domain is found at 2-118 (LKIALESLGC…IDKILKELSE (117 aa)). Cysteine 11, cysteine 47, cysteine 81, cysteine 155, cysteine 159, and cysteine 162 together coordinate [4Fe-4S] cluster. The Radical SAM core domain maps to 141–371 (STPSYMAYLK…MMIQQKISEE (231 aa)). Residues 374 to 441 (DKKIGKTYEV…EYDLMGDVLY (68 aa)) enclose the TRAM domain.

Belongs to the methylthiotransferase family. RimO subfamily. The cofactor is [4Fe-4S] cluster.

The protein localises to the cytoplasm. The enzyme catalyses L-aspartate(89)-[ribosomal protein uS12]-hydrogen + (sulfur carrier)-SH + AH2 + 2 S-adenosyl-L-methionine = 3-methylsulfanyl-L-aspartate(89)-[ribosomal protein uS12]-hydrogen + (sulfur carrier)-H + 5'-deoxyadenosine + L-methionine + A + S-adenosyl-L-homocysteine + 2 H(+). Its function is as follows. Catalyzes the methylthiolation of an aspartic acid residue of ribosomal protein uS12. The protein is Ribosomal protein uS12 methylthiotransferase RimO of Clostridioides difficile (strain 630) (Peptoclostridium difficile).